The primary structure comprises 427 residues: Adenylosuccinate synthetase (427 aa).

Residues 12 to 18 (GDEGKGK) and 40 to 42 (GHT) each bind GTP. The Proton acceptor role is filled by Asp13. Mg(2+) contacts are provided by Asp13 and Gly40. Residues 13 to 16 (DEGK), 38 to 41 (NAGH), Thr130, Arg144, Gln224, Thr239, and Arg303 contribute to the IMP site. Catalysis depends on His41, which acts as the Proton donor. 299–305 (VTTGRAR) provides a ligand contact to substrate. GTP-binding positions include Arg305, 331-333 (KID), and 413-415 (SVG).

Belongs to the adenylosuccinate synthetase family. Homodimer. Mg(2+) is required as a cofactor.

It localises to the cytoplasm. It carries out the reaction IMP + L-aspartate + GTP = N(6)-(1,2-dicarboxyethyl)-AMP + GDP + phosphate + 2 H(+). The protein operates within purine metabolism; AMP biosynthesis via de novo pathway; AMP from IMP: step 1/2. Its function is as follows. Plays an important role in the de novo pathway of purine nucleotide biosynthesis. Catalyzes the first committed step in the biosynthesis of AMP from IMP. The protein is Adenylosuccinate synthetase of Clostridium novyi (strain NT).